The chain runs to 196 residues: Cell division protein SepF (196 aa).

Positions 16–81 are disordered; it reads EDDEEFNEPA…KRAGSTFTKP (66 aa). Positions 56–69 are enriched in polar residues; the sequence is RPAQSTSKAQTQTA.

Belongs to the SepF family. As to quaternary structure, homodimer. Interacts with FtsZ.

It is found in the cytoplasm. Cell division protein that is part of the divisome complex and is recruited early to the Z-ring. Probably stimulates Z-ring formation, perhaps through the cross-linking of FtsZ protofilaments. Its function overlaps with FtsA. The protein is Cell division protein SepF of Lactococcus lactis subsp. lactis (strain IL1403) (Streptococcus lactis).